A 596-amino-acid chain; its full sequence is Histone deacetylase 9 (596 aa).

Composition is skewed to basic and acidic residues over residues 132 to 153 (REKE…HRQE) and 160 to 172 (RSKD…AVAS). Disordered stretches follow at residues 132 to 172 (REKE…AVAS), 214 to 258 (HTSL…VRSR), 293 to 313 (SSVS…GPVA), and 522 to 596 (QPEG…QQVT). The segment at 172-222 (STEVKQKLQEFILSKSATKEPLTNGTSHSMGRHPKLWYTAAHHTSLDQSSP) is interaction with mef2. Residues 221–237 (SPPPSGTSPTYKCPPPG) show a composition bias toward pro residues. The span at 293–312 (SSVSSSSPVSGPSSPNNGPV) shows a compositional bias: low complexity. Residues 522–536 (QPEGHLEEAEEDLHG) are compositionally biased toward basic and acidic residues. A compositionally biased stretch (polar residues) spans 541–558 (QEKSSSIDNTRSYSSTDL). Over residues 567–585 (KVKEEPPDSENEIKTHLQS) the composition is skewed to basic and acidic residues. Residues 586 to 596 (EQKSVFAQQVT) are compositionally biased toward polar residues.

This sequence belongs to the histone deacetylase family. HD type 2 subfamily. Homodimer. Interacts with mef2. Broadly expressed.

The protein resides in the nucleus. The catalysed reaction is N(6)-acetyl-L-lysyl-[histone] + H2O = L-lysyl-[histone] + acetate. Devoided of intrinsic deacetylase activity, promotes the deacetylation of lysine residues on the N-terminal part of the core histones (H2A, H2B, H3 and H4) by recruiting other histone deacetylases. Histone deacetylation gives a tag for epigenetic repression and plays an important role in transcriptional regulation, cell cycle progression and developmental events. Represses MEF2-dependent transcription. This is Histone deacetylase 9 (hdac9) from Xenopus laevis (African clawed frog).